The sequence spans 275 residues: NH(3)-dependent NAD(+) synthetase (275 aa).

Residue 46–53 coordinates ATP; the sequence is GISGGQDS. Residue D52 participates in Mg(2+) binding. Residue R140 participates in deamido-NAD(+) binding. T160 serves as a coordination point for ATP. A Mg(2+)-binding site is contributed by E165. Residues K173 and D180 each coordinate deamido-NAD(+). Residues K189 and T211 each contribute to the ATP site. 260 to 261 lines the deamido-NAD(+) pocket; it reads HK.

Belongs to the NAD synthetase family. Homodimer.

It catalyses the reaction deamido-NAD(+) + NH4(+) + ATP = AMP + diphosphate + NAD(+) + H(+). Its pathway is cofactor biosynthesis; NAD(+) biosynthesis; NAD(+) from deamido-NAD(+) (ammonia route): step 1/1. Catalyzes the ATP-dependent amidation of deamido-NAD to form NAD. Uses ammonia as a nitrogen source. In Salmonella enteritidis PT4 (strain P125109), this protein is NH(3)-dependent NAD(+) synthetase.